The primary structure comprises 411 residues: Glucose-1-phosphate adenylyltransferase (411 aa).

Alpha-D-glucose 1-phosphate-binding positions include G161, 176–177 (EK), and S195.

Belongs to the bacterial/plant glucose-1-phosphate adenylyltransferase family. Homotetramer.

It catalyses the reaction alpha-D-glucose 1-phosphate + ATP + H(+) = ADP-alpha-D-glucose + diphosphate. It participates in glycan biosynthesis; glycogen biosynthesis. In terms of biological role, involved in the biosynthesis of ADP-glucose, a building block required for the elongation reactions to produce glycogen. Catalyzes the reaction between ATP and alpha-D-glucose 1-phosphate (G1P) to produce pyrophosphate and ADP-Glc. The sequence is that of Glucose-1-phosphate adenylyltransferase from Anaeromyxobacter sp. (strain Fw109-5).